We begin with the raw amino-acid sequence, 99 residues long: Putative protein tag-209 (99 aa).

An N-terminal signal peptide occupies residues 1-16 (MLKLLAFVALLSVSVS).

The polypeptide is Putative protein tag-209 (tag-209) (Caenorhabditis elegans).